The sequence spans 634 residues: 1-phosphatidylinositol 4,5-bisphosphate phosphodiesterase zeta-1 (634 aa).

Positions 35 to 70 (CNTIHVKYIFKDNDRLKQGRITIEEFRTIYRIITYR) constitute an EF-hand domain. The region spanning 155–299 (QDMTHPLTDY…LKFKILVRNK (145 aa)) is the PI-PLC X-box domain. Residues His170 and His215 contribute to the active site. The tract at residues 312 to 345 (GSDMHGKVEEFEEEEEIEQEEDGSGAKEPEPVGD) is disordered. A compositionally biased stretch (acidic residues) spans 321 to 334 (EFEEEEEIEQEEDG). The 117-residue stretch at 376 to 492 (LSDLVIYTKV…GYVLKPRFLR (117 aa)) folds into the PI-PLC Y-box domain. Residues 492-615 (RDKKTKFNPH…RGYRRVPLFS (124 aa)) enclose the C2 domain.

Interacts (via its C2 domain) with PtdIns(3)P and, to a lesser extent, PtdIns(5)P in vitro. Ca(2+) serves as cofactor.

Its subcellular location is the nucleus. It localises to the cytoplasm. The protein resides in the perinuclear region. The enzyme catalyses a 1,2-diacyl-sn-glycero-3-phospho-(1D-myo-inositol-4,5-bisphosphate) + H2O = 1D-myo-inositol 1,4,5-trisphosphate + a 1,2-diacyl-sn-glycerol + H(+). Functionally, the production of the second messenger molecules diacylglycerol (DAG) and inositol 1,4,5-trisphosphate (IP3) is mediated by activated phosphatidylinositol-specific phospholipase C enzymes. In vitro, hydrolyzes PtdIns(4,5)P2 in a Ca(2+)-dependent manner. Triggers intracellular Ca(2+) oscillations in oocytes solely during M phase and is involved in inducing oocyte activation and initiating embryonic development up to the blastocyst stage. Is therefore a strong candidate for the egg-activating soluble sperm factor that is transferred from the sperm into the egg cytoplasm following gamete membrane fusion. May exert an inhibitory effect on phospholipase-C-coupled processes that depend on calcium ions and protein kinase C, including CFTR trafficking and function. The protein is 1-phosphatidylinositol 4,5-bisphosphate phosphodiesterase zeta-1 of Bos taurus (Bovine).